The following is a 1042-amino-acid chain: Putative type I restriction enzyme MjaIXP endonuclease subunit (1042 aa).

The Helicase ATP-binding domain maps to 323–487 (GETPEDRRIG…FLVFGDYISA (165 aa)). The short motif at 439 to 442 (DEAH) is the DEAH box element. The region spanning 551-731 (LTEDYLSKVS…DIKVVIEEMK (181 aa)) is the Helicase C-terminal domain.

Belongs to the HsdR family. As to quaternary structure, the type I restriction/modification system is composed of three polypeptides R, M and S.

It carries out the reaction Endonucleolytic cleavage of DNA to give random double-stranded fragments with terminal 5'-phosphates, ATP is simultaneously hydrolyzed.. Functionally, the restriction (R) subunit of a type I restriction enzyme that recognizes 5'-CCAN(5)GTR-3' and cleaves a random distance away. The R subunit is required for both nuclease and ATPase activities, but not for modification. After locating a non-methylated recognition site, the enzyme complex serves as a molecular motor that translocates DNA in an ATP-dependent manner until a collision occurs that triggers cleavage. The protein is Putative type I restriction enzyme MjaIXP endonuclease subunit of Methanocaldococcus jannaschii (strain ATCC 43067 / DSM 2661 / JAL-1 / JCM 10045 / NBRC 100440) (Methanococcus jannaschii).